A 331-amino-acid chain; its full sequence is MSFFAVACSAPRSSMLLTGLNSSFSDMHRSPLFVFPVTISSRSVKRFAAVSSDSVLDPESKNQTRSRRKNKEAVTPIAETENNEKFPTKVPRKSKRGRRSEADAVEDYVRSSLERTFSTIKEQNPEVFENKEKANFIKDRGVDEEEEEEEEMVVEEEDPDWPVDTDVGWGIKASEYFDTHPIKNVVGDDGSEIDWEGEIDDSWVKEINCLEWESFAFHPSPLVVLVFERYKRASDNWKTLKELEKAIKVYWDAKDRLPPRAVKIDLNIETDLAYALKAKECPQILFLRGNRILYREKDFRTADELVHMIAHFYYKAKRPSCVDKANVTPYC.

The N-terminal 59 residues, 1–59, are a transit peptide targeting the chloroplast; that stretch reads MSFFAVACSAPRSSMLLTGLNSSFSDMHRSPLFVFPVTISSRSVKRFAAVSSDSVLDPE. 2 disordered regions span residues 52-105 and 141-160; these read SDSV…ADAV and GVDEEEEEEEEMVVEEEDPD. Positions 142 to 160 are enriched in acidic residues; that stretch reads VDEEEEEEEEMVVEEEDPD.

In terms of assembly, component of the transcriptionally active chromosome (TAC) complexes. Interacts with FSD2 and PRDA1. Interacts with FSD3 and CITRX/TRXZ. Binds to PTAC12/HMR/PAP5. As to expression, expressed in leaves, shoots, stems, cauline leaves, flower buds, flowers and siliques.

It localises to the plastid. The protein localises to the chloroplast. It is found in the chloroplast stroma. Its subcellular location is the chloroplast nucleoid. The protein resides in the nucleus. Its function is as follows. Plays an essential role in early steps of chloroplast development. Involved in the regulation of plastid gene expression. May positively regulate plastid-encoded RNA polymerase (PEP) activity through binding to FSD3 and CITRX/TRXZ. Involved in redox-mediated regulation of chloroplast development. Possesses disulfide reductase activity in vitro. Required for the proper function of the plastid transcriptional machinery and protein accumulation in thylakoid membranes. May function as molecular chaperone to ensure proper organization of the nucleoids in chloroplasts. May mediate some aspect of thylakoid structure or function that controls non-photochemical quenching (NPQ). Participates in the early light signaling events of photobody biogenesis in chloroplasts. May mediate the degradation of two repressors of chloroplast biogenesis, PIF1 and PIF3 in nucleus. Collaboratively with PTAC12/HMR/PAP5, involved in the regulation of thermoresponsive responses via the stabilization of PIF4 in the daytime to initiate thermomorphogenesis. The polypeptide is Thioredoxin-like fold domain-containing protein MRL7, chloroplastic (Arabidopsis thaliana (Mouse-ear cress)).